The sequence spans 97 residues: Protein RALF-like 2 (97 aa).

A signal peptide spans 1-25 (MEARHMLVTILLLSFVFMNIMKVEA). Intrachain disulfides connect Cys42–Cys49 and Cys61–Cys67.

This sequence belongs to the plant rapid alkalinization factor (RALF) family.

The protein localises to the secreted. Functionally, cell signaling peptide that may regulate plant stress, growth, and development. Mediates a rapid alkalinization of extracellular space by mediating a transient increase in the cytoplasmic Ca(2+) concentration leading to a calcium-dependent signaling events through a cell surface receptor and a concomitant activation of some intracellular mitogen-activated protein kinases. The sequence is that of Protein RALF-like 2 (RALFL2) from Arabidopsis thaliana (Mouse-ear cress).